The primary structure comprises 303 residues: Acetaldehyde dehydrogenase (303 aa).

13-16 (SGNI) lines the NAD(+) pocket. The active-site Acyl-thioester intermediate is the Cys128. NAD(+) contacts are provided by residues 159 to 167 (SAGPGTRQN) and Asn278.

This sequence belongs to the acetaldehyde dehydrogenase family.

The enzyme catalyses acetaldehyde + NAD(+) + CoA = acetyl-CoA + NADH + H(+). The protein is Acetaldehyde dehydrogenase of Chloroflexus aggregans (strain MD-66 / DSM 9485).